We begin with the raw amino-acid sequence, 123 residues long: Small ribosomal subunit protein uS12 (123 aa).

Residues Met1 to Pro28 are disordered. A compositionally biased stretch (basic residues) spans Arg9–Ser21. A 3-methylthioaspartic acid modification is found at Asp89.

Belongs to the universal ribosomal protein uS12 family. In terms of assembly, part of the 30S ribosomal subunit. Contacts proteins S8 and S17. May interact with IF1 in the 30S initiation complex.

Functionally, with S4 and S5 plays an important role in translational accuracy. In terms of biological role, interacts with and stabilizes bases of the 16S rRNA that are involved in tRNA selection in the A site and with the mRNA backbone. Located at the interface of the 30S and 50S subunits, it traverses the body of the 30S subunit contacting proteins on the other side and probably holding the rRNA structure together. The combined cluster of proteins S8, S12 and S17 appears to hold together the shoulder and platform of the 30S subunit. This Ruegeria sp. (strain TM1040) (Silicibacter sp.) protein is Small ribosomal subunit protein uS12.